The following is a 533-amino-acid chain: Beta-glucosidase 24 (533 aa).

The first 26 residues, 1–26, serve as a signal peptide directing secretion; it reads MVLQKLPLMSIGLLWLLIIVGPLVNA. Residue Gln-58 participates in a beta-D-glucoside binding. N-linked (GlcNAc...) asparagine glycans are attached at residues Asn-64 and Asn-88. A beta-D-glucoside contacts are provided by residues His-161 and 206–207; that span reads NE. Catalysis depends on Glu-207, which acts as the Proton donor. Residues Cys-226 and Cys-239 are joined by a disulfide bond. Tyr-355 contacts a beta-D-glucoside. The N-linked (GlcNAc...) asparagine glycan is linked to Asn-388. Residue Glu-427 coordinates a beta-D-glucoside. Glu-427 functions as the Nucleophile in the catalytic mechanism. Asn-437, Asn-442, and Asn-470 each carry an N-linked (GlcNAc...) asparagine glycan. A beta-D-glucoside is bound by residues Trp-477, 484–485, and Phe-493; that span reads EW. The N-linked (GlcNAc...) asparagine glycan is linked to Asn-503. The short motif at 530-533 is the Prevents secretion from ER element; it reads KDEL.

The protein belongs to the glycosyl hydrolase 1 family.

It localises to the endoplasmic reticulum lumen. It catalyses the reaction Hydrolysis of terminal, non-reducing beta-D-glucosyl residues with release of beta-D-glucose.. The sequence is that of Beta-glucosidase 24 from Arabidopsis thaliana (Mouse-ear cress).